A 361-amino-acid polypeptide reads, in one-letter code: tRNA 2-selenouridine synthase (361 aa).

Residues 14-137 (LIADTPIIDV…LRQTAIQATI (124 aa)) form the Rhodanese domain. Cysteine 97 functions as the S-selanylcysteine intermediate in the catalytic mechanism.

Belongs to the SelU family. Monomer.

It catalyses the reaction 5-methylaminomethyl-2-thiouridine(34) in tRNA + selenophosphate + (2E)-geranyl diphosphate + H2O + H(+) = 5-methylaminomethyl-2-selenouridine(34) in tRNA + (2E)-thiogeraniol + phosphate + diphosphate. It carries out the reaction 5-methylaminomethyl-2-thiouridine(34) in tRNA + (2E)-geranyl diphosphate = 5-methylaminomethyl-S-(2E)-geranyl-thiouridine(34) in tRNA + diphosphate. The enzyme catalyses 5-methylaminomethyl-S-(2E)-geranyl-thiouridine(34) in tRNA + selenophosphate + H(+) = 5-methylaminomethyl-2-(Se-phospho)selenouridine(34) in tRNA + (2E)-thiogeraniol. The catalysed reaction is 5-methylaminomethyl-2-(Se-phospho)selenouridine(34) in tRNA + H2O = 5-methylaminomethyl-2-selenouridine(34) in tRNA + phosphate. Involved in the post-transcriptional modification of the uridine at the wobble position (U34) of tRNA(Lys), tRNA(Glu) and tRNA(Gln). Catalyzes the conversion of 2-thiouridine (S2U-RNA) to 2-selenouridine (Se2U-RNA). Acts in a two-step process involving geranylation of 2-thiouridine (S2U) to S-geranyl-2-thiouridine (geS2U) and subsequent selenation of the latter derivative to 2-selenouridine (Se2U) in the tRNA chain. This is tRNA 2-selenouridine synthase from Escherichia coli O6:H1 (strain CFT073 / ATCC 700928 / UPEC).